The following is a 1819-amino-acid chain: Non-reducing polyketide synthase nscA (1819 aa).

Residues 25–277 are N-terminal acylcarrier protein transacylase domain (SAT); sequence RRLDQHSKDR…PLPVYDGLCH (253 aa). The region spanning 413–846 is the Ketosynthase family 3 (KS3) domain; it reads SSKLAIVGMA…GGNTTLLLED (434 aa). Catalysis depends on for beta-ketoacyl synthase activity residues Cys586, His721, and His764. A malonyl-CoA:ACP transacylase (MAT) domain region spans residues 952–1249; sequence FTSQGAYYHG…MIPSAPAMSS (298 aa). The tract at residues 1339–1658 is product template (PT) domain; the sequence is TSLVHQITAE…RLLMDRFFSP (320 aa). An N-terminal hotdog fold region spans residues 1343 to 1479; sequence HQITAETVEA…AMIRFEDPMA (137 aa). In terms of domain architecture, PKS/mFAS DH spans 1343-1653; that stretch reads HQITAETVEA…IRRVPRLLMD (311 aa). The active-site Proton acceptor; for dehydratase activity is the His1375. Positions 1507–1653 are C-terminal hotdog fold; that stretch reads ASRLSKPLAY…IRRVPRLLMD (147 aa). Asp1564 acts as the Proton donor; for dehydratase activity in catalysis. Residues 1703–1742 form a disordered region; the sequence is SSTMASKAPEPAPLLATSSESSTPKESPIVTPAESEREDP. Low complexity predominate over residues 1719–1730; that stretch reads TSSESSTPKESP. The Carrier domain occupies 1742-1819; that stretch reads PVDNNMISQC…EMTAWIEEYC (78 aa). Ser1779 carries the post-translational modification O-(pantetheine 4'-phosphoryl)serine.

It depends on pantetheine 4'-phosphate as a cofactor.

Its pathway is secondary metabolite biosynthesis. In terms of biological role, non-reducing polyketide synthase; part of the gene cluster that mediates the biosynthesis of neosartoricin B, a prenylated anthracenone that probably exhibits T-cell antiproliferative activity, suggestive of a physiological role as an immunosuppressive agent. The non-reducing polyketide synthase nscA probably synthesizes and cyclizes the decaketide backbone. The hydrolase nscB then mediates the product release through hydrolysis followed by spontaneous decarboxylation. The prenyltransferase nscD catalyzes the addition of the dimethylallyl group to the aromatic C5. The FAD-dependent monooxygenase nscC is then responsible for the stereospecific hydroxylation at C2. Neosartoricin B can be converted into two additional compounds neosartoricins C and D. Neosartoricin C is a spirocyclic compound that is cyclized through the attack of C3 hydroxyl on C14, followed by dehydration. On the other hand, neosartoricin D is a further cyclized compound in which attack of C2 on C14 in neosartoricin C results in the formation of the acetal-containing dioxabicyclo-octanone ring. Both of these compounds are novel and possibly represent related metabolites of the gene cluster. The polypeptide is Non-reducing polyketide synthase nscA (Trichophyton verrucosum (strain HKI 0517)).